The sequence spans 244 residues: Small ribosomal subunit protein uS2 (244 aa).

Belongs to the universal ribosomal protein uS2 family.

The chain is Small ribosomal subunit protein uS2 from Endomicrobium trichonymphae.